The primary structure comprises 409 residues: 4-hydroxy-3-methylbut-2-en-1-yl diphosphate synthase (flavodoxin) (409 aa).

The [4Fe-4S] cluster site is built by cysteine 298, cysteine 301, cysteine 344, and glutamate 351.

It belongs to the IspG family. The cofactor is [4Fe-4S] cluster.

It carries out the reaction (2E)-4-hydroxy-3-methylbut-2-enyl diphosphate + oxidized [flavodoxin] + H2O + 2 H(+) = 2-C-methyl-D-erythritol 2,4-cyclic diphosphate + reduced [flavodoxin]. It functions in the pathway isoprenoid biosynthesis; isopentenyl diphosphate biosynthesis via DXP pathway; isopentenyl diphosphate from 1-deoxy-D-xylulose 5-phosphate: step 5/6. Converts 2C-methyl-D-erythritol 2,4-cyclodiphosphate (ME-2,4cPP) into 1-hydroxy-2-methyl-2-(E)-butenyl 4-diphosphate. The protein is 4-hydroxy-3-methylbut-2-en-1-yl diphosphate synthase (flavodoxin) of Dechloromonas aromatica (strain RCB).